Reading from the N-terminus, the 354-residue chain is MKNKNKRLLVMAGGTGGHVFPGLAVAKQLQSEGWEIRWLGTADRMEADLVPKHGIEIDFIKVKGLRGQGLKKLIAAPFQILGAISQAKKHIKAWQPDVVLGMGGYVSGPGGIAAWLSGIPVVLHEQNAVAGLTNQWLSKIAKRVFQAFPGAFPNAEVVGNPVREDVCQLPHPKERFAQRTGPIRLLVMGGSQGARILNTTLPEALPQLSHEIEIWHQAGKGSQETVEQAYRDNGIADAKVTEFIDNVAEAYAWADLLVCRSGALTVSEVSAAGVGSIFIPFMHKDRQQALNADHLVQCGAAQMIEQQDLTVQGLVDTLNGLERKQLLEMACNARDAAIIDADVRVANAIKSLAK.

Residues 15–17 (TGG), N127, R163, S191, I244, 263–268 (ALTVSE), and Q288 each bind UDP-N-acetyl-alpha-D-glucosamine.

The protein belongs to the glycosyltransferase 28 family. MurG subfamily.

The protein resides in the cell inner membrane. The catalysed reaction is di-trans,octa-cis-undecaprenyl diphospho-N-acetyl-alpha-D-muramoyl-L-alanyl-D-glutamyl-meso-2,6-diaminopimeloyl-D-alanyl-D-alanine + UDP-N-acetyl-alpha-D-glucosamine = di-trans,octa-cis-undecaprenyl diphospho-[N-acetyl-alpha-D-glucosaminyl-(1-&gt;4)]-N-acetyl-alpha-D-muramoyl-L-alanyl-D-glutamyl-meso-2,6-diaminopimeloyl-D-alanyl-D-alanine + UDP + H(+). It participates in cell wall biogenesis; peptidoglycan biosynthesis. Cell wall formation. Catalyzes the transfer of a GlcNAc subunit on undecaprenyl-pyrophosphoryl-MurNAc-pentapeptide (lipid intermediate I) to form undecaprenyl-pyrophosphoryl-MurNAc-(pentapeptide)GlcNAc (lipid intermediate II). The polypeptide is UDP-N-acetylglucosamine--N-acetylmuramyl-(pentapeptide) pyrophosphoryl-undecaprenol N-acetylglucosamine transferase (Aliivibrio fischeri (strain ATCC 700601 / ES114) (Vibrio fischeri)).